The following is a 473-amino-acid chain: Vasculin (473 aa).

Disordered stretches follow at residues M1–N25, R45–A169, and V191–D342. A Phosphoserine modification is found at S49. At R87 the chain carries Omega-N-methylarginine. Residues G93–S107 are compositionally biased toward low complexity. Residues E119–E133 show a composition bias toward basic and acidic residues. Polar residues-rich tracts occupy residues L194 to G204 and A251 to R286. Residues S274, S276, S322, and S381 each carry the phosphoserine modification. The span at M293–F329 shows a compositional bias: basic and acidic residues. Residues G444–V473 are disordered. A compositionally biased stretch (acidic residues) spans E456 to V473.

The protein belongs to the vasculin family. Interacts with GTF2B, GTF2F2, RNA polymerase II and TBP.

It localises to the nucleus. Its function is as follows. Functions as a GC-rich promoter-specific transactivating transcription factor. In Pongo abelii (Sumatran orangutan), this protein is Vasculin (GPBP1).